The primary structure comprises 239 residues: UPF0502 protein Bcen_5249 (239 aa).

The segment at 196–239 is disordered; that stretch reads IRGAKGRTEAPRGRSGATQCAGSTDGERTRHRRRRTGRRVLIAS. Residues 224 to 233 show a composition bias toward basic residues; that stretch reads TRHRRRRTGR.

Belongs to the UPF0502 family.

This chain is UPF0502 protein Bcen_5249, found in Burkholderia orbicola (strain AU 1054).